Consider the following 297-residue polypeptide: Homoserine kinase (297 aa).

Residue Pro-82 to Ala-92 participates in ATP binding.

It belongs to the GHMP kinase family. Homoserine kinase subfamily.

It localises to the cytoplasm. It catalyses the reaction L-homoserine + ATP = O-phospho-L-homoserine + ADP + H(+). It participates in amino-acid biosynthesis; L-threonine biosynthesis; L-threonine from L-aspartate: step 4/5. Catalyzes the ATP-dependent phosphorylation of L-homoserine to L-homoserine phosphate. The protein is Homoserine kinase of Clostridium botulinum (strain ATCC 19397 / Type A).